Reading from the N-terminus, the 35-residue chain is Beta-amanitin proprotein (35 aa).

Residues 1–10 (MSDINATRLP) constitute a propeptide that is removed on maturation. The cyclopeptide (Ile-Pro) cross-link spans 11–18 (IWGIGCDP). Residues 12-16 (WGIGC) constitute a cross-link (2'-cysteinyl-6'-hydroxytryptophan sulfoxide (Trp-Cys)). Positions 19–35 (CVGDDVTALLTRGEALC) are excised as a propeptide.

This sequence belongs to the MSDIN fungal toxin family. Post-translationally, processed by the macrocyclase-peptidase enzyme POPB to yield a toxic cyclic octapeptide. POPB first removes 10 residues from the N-terminus. Conformational trapping of the remaining peptide forces the enzyme to release this intermediate rather than proceed to macrocyclization. The enzyme rebinds the remaining peptide in a different conformation and catalyzes macrocyclization of the N-terminal 8 residues. In terms of tissue distribution, expressed in basidiocarps.

Toxin belonging to the bicyclic octapeptides amatoxins that acts by binding non-competitively to RNA polymerase II and greatly slowing the elongation of transcripts from target promoters. This chain is Beta-amanitin proprotein, found in Amanita exitialis (Guangzhou destroying angel).